The sequence spans 307 residues: Vesicle-trafficking protein SEC22a (307 aa).

S2 is modified (N-acetylserine). Topologically, residues 2 to 187 are cytoplasmic; it reads SMILSASVIR…ISSAHQRLEP (186 aa). Residues S6 and S8 each carry the phosphoserine modification. One can recognise a Longin domain in the interval 8–119; sequence SVIRVRDGLP…YCFIEFDNFI (112 aa). A helical membrane pass occupies residues 188 to 208; sequence ATLSGIVGFILSLLCGALNLI. Residues 209-226 lie on the Lumenal side of the membrane; that stretch reads RGFHAIESLLQSDGDDFN. A helical membrane pass occupies residues 227-247; that stretch reads YIIAFFLGTAACLYQCYLLVY. Topologically, residues 248 to 253 are cytoplasmic; the sequence is YTGWRN. The chain crosses the membrane as a helical span at residues 254-271; sequence VKSFLTFGLICLCNMYLY. The Lumenal portion of the chain corresponds to 272-274; it reads ELR. A helical transmembrane segment spans residues 275 to 295; the sequence is NLWQLFFHVTVGAFVTLQIWL. Over 296–307 the chain is Cytoplasmic; sequence RQAQGKAPDYDV.

Belongs to the synaptobrevin family.

Its subcellular location is the endoplasmic reticulum membrane. In terms of biological role, may be involved in vesicle transport between the ER and the Golgi complex. In Macaca fascicularis (Crab-eating macaque), this protein is Vesicle-trafficking protein SEC22a (SEC22A).